Consider the following 425-residue polypeptide: tRNA(Ile)-lysidine synthase (425 aa).

27 to 32 (SGGLDS) provides a ligand contact to ATP.

The protein belongs to the tRNA(Ile)-lysidine synthase family.

The protein resides in the cytoplasm. It catalyses the reaction cytidine(34) in tRNA(Ile2) + L-lysine + ATP = lysidine(34) in tRNA(Ile2) + AMP + diphosphate + H(+). Its function is as follows. Ligates lysine onto the cytidine present at position 34 of the AUA codon-specific tRNA(Ile) that contains the anticodon CAU, in an ATP-dependent manner. Cytidine is converted to lysidine, thus changing the amino acid specificity of the tRNA from methionine to isoleucine. The protein is tRNA(Ile)-lysidine synthase of Streptococcus pneumoniae (strain 70585).